The sequence spans 246 residues: Uridylate kinase (246 aa).

16–19 lines the ATP pocket; it reads KLGG. A UMP-binding site is contributed by glycine 57. 2 residues coordinate ATP: glycine 58 and arginine 62. UMP contacts are provided by residues aspartate 77 and 138–145; that span reads MGMPYFST. Positions 171 and 174 each coordinate ATP.

This sequence belongs to the UMP kinase family. As to quaternary structure, homohexamer.

The protein resides in the cytoplasm. The enzyme catalyses UMP + ATP = UDP + ADP. Its pathway is pyrimidine metabolism; CTP biosynthesis via de novo pathway; UDP from UMP (UMPK route): step 1/1. With respect to regulation, inhibited by UTP. Functionally, catalyzes the reversible phosphorylation of UMP to UDP. The sequence is that of Uridylate kinase from Corynebacterium jeikeium (strain K411).